The primary structure comprises 575 residues: Phosphoenolpyruvate-protein phosphotransferase (575 aa).

Tyr122 is subject to Phosphotyrosine. His189 acts as the Tele-phosphohistidine intermediate in catalysis. Residues Arg296 and Arg332 each coordinate phosphoenolpyruvate. 2 residues coordinate Mg(2+): Glu431 and Asp455. Residues 454 to 455 (ND) and Arg465 contribute to the phosphoenolpyruvate site. Cys502 acts as the Proton donor in catalysis.

The protein belongs to the PEP-utilizing enzyme family. Homodimer. Interacts with the pole-localizer protein TmaR. Binding to TmaR is reversible as long as TmaR can get phosphorylated, whereas binding to non-phosphorylated TmaR is very strong and shifts the equilibrium toward binding. Mg(2+) is required as a cofactor. Phosphorylated on Tyr-122. Phosphorylation on Tyr-122 is important for polar localization but not for interaction with TmaR and for activity.

The protein resides in the cytoplasm. It catalyses the reaction L-histidyl-[protein] + phosphoenolpyruvate = N(pros)-phospho-L-histidyl-[protein] + pyruvate. With respect to regulation, inhibited by oxalate. General (non sugar-specific) component of the phosphoenolpyruvate-dependent sugar phosphotransferase system (sugar PTS). This major carbohydrate active-transport system catalyzes the phosphorylation of incoming sugar substrates concomitantly with their translocation across the cell membrane. Enzyme I transfers the phosphoryl group from phosphoenolpyruvate (PEP) to the phosphoryl carrier protein (HPr). Can also use (Z)-3-fluoro-PEP (ZFPEP), (Z)-3-methyl-PEP (ZMePEP), (Z)-3-chloro-PEP (ZClPEP) and (E)-3-chloro-PEP (EClPEP) as alternative phosphoryl donors. This is Phosphoenolpyruvate-protein phosphotransferase from Escherichia coli (strain K12).